A 625-amino-acid chain; its full sequence is tRNA uridine 5-carboxymethylaminomethyl modification enzyme MnmG (625 aa).

An FAD-binding site is contributed by 14–19 (GAGHAG). 273 to 287 (GPRYCPSIEDKIVRF) is a binding site for NAD(+).

Belongs to the MnmG family. Homodimer. Heterotetramer of two MnmE and two MnmG subunits. FAD is required as a cofactor.

The protein localises to the cytoplasm. NAD-binding protein involved in the addition of a carboxymethylaminomethyl (cmnm) group at the wobble position (U34) of certain tRNAs, forming tRNA-cmnm(5)s(2)U34. The protein is tRNA uridine 5-carboxymethylaminomethyl modification enzyme MnmG of Clostridium botulinum (strain Okra / Type B1).